A 352-amino-acid chain; its full sequence is Rhodopsin (352 aa).

Residues 1–36 (MNGTEGPFFYIPMVNTTGIVRSPYEYPQYYLVNPAA) are Extracellular-facing. Residues Asn2 and Asn15 are each glycosylated (N-linked (GlcNAc...) asparagine). A helical membrane pass occupies residues 37 to 61 (YACLGAYMFFLILVGFPVNFLTLYV). Topologically, residues 62-73 (TLEHKKLRTPLN) are cytoplasmic. The helical transmembrane segment at 74–96 (YILLNLAVADLFMVFGGFTTTMY) threads the bilayer. Topologically, residues 97–110 (TSMHGYFVLGRLGC) are extracellular. Residues Cys110 and Cys187 are joined by a disulfide bond. A helical membrane pass occupies residues 111-133 (NIEGFFATLGGEIALWSLVVLAI). Residues 134-136 (ERW) carry the 'Ionic lock' involved in activated form stabilization motif. Residues 134 to 152 (ERWVVVCKPISNFRFGENH) are Cytoplasmic-facing. Residues 153 to 173 (AIMGVAFTWFMASACAVPPLV) traverse the membrane as a helical segment. The Extracellular segment spans residues 174-202 (GWSRYIPEGMQCSCGVDYYTRAEGFNNES). Asn200 carries an N-linked (GlcNAc...) asparagine glycan. Residues 203-224 (FVIYMFIVHFCIPLAVVGFCYG) form a helical membrane-spanning segment. Residues 225–252 (RLLCAVKEAAAAQQESETTQRAEREVSR) are Cytoplasmic-facing. Residues 253–274 (MVVIMVIGFLVCWLPYASVAWY) traverse the membrane as a helical segment. The Extracellular portion of the chain corresponds to 275–286 (IFTHQGSEFGPP). The chain crosses the membrane as a helical span at residues 287–308 (FMTVPAFFAKSSSIYNPMIYIC). At Lys296 the chain carries N6-(retinylidene)lysine. Over 309-352 (MNKQFRHCMITTLCCGKNPFEEEEGASTTKTEASSVSSSSVSPA) the chain is Cytoplasmic. Residues Cys322 and Cys323 are each lipidated (S-palmitoyl cysteine). The tract at residues 331 to 352 (EEGASTTKTEASSVSSSSVSPA) is disordered. Low complexity predominate over residues 342 to 352 (SSVSSSSVSPA).

This sequence belongs to the G-protein coupled receptor 1 family. Opsin subfamily. Post-translationally, phosphorylated on some or all of the serine and threonine residues present in the C-terminal region. Contains one covalently linked retinal chromophore.

It localises to the membrane. The protein localises to the cell projection. Its subcellular location is the cilium. It is found in the photoreceptor outer segment. Functionally, photoreceptor required for image-forming vision at low light intensity. While most salt water fish species use retinal as chromophore, most freshwater fish use 3-dehydroretinal, or a mixture of retinal and 3-dehydroretinal. Light-induced isomerization of 11-cis to all-trans retinal triggers a conformational change that activates signaling via G-proteins. Subsequent receptor phosphorylation mediates displacement of the bound G-protein alpha subunit by arrestin and terminates signaling. This is Rhodopsin (rho) from Zosterisessor ophiocephalus (Grass goby).